We begin with the raw amino-acid sequence, 285 residues long: uncharacterized protein (285 aa).

Residues 197–217 (PTIGALLSLVSAFFSFIPFLM) form a helical membrane-spanning segment.

It localises to the membrane. This is an uncharacterized protein from Saccharomyces cerevisiae (strain ATCC 204508 / S288c) (Baker's yeast).